Reading from the N-terminus, the 413-residue chain is Peptidase T (413 aa).

Histidine 81 lines the Zn(2+) pocket. Residue aspartate 83 is part of the active site. Aspartate 143 provides a ligand contact to Zn(2+). Glutamate 178 functions as the Proton acceptor in the catalytic mechanism. The Zn(2+) site is built by glutamate 179, aspartate 201, and histidine 383.

It belongs to the peptidase M20B family. Zn(2+) serves as cofactor.

It is found in the cytoplasm. It catalyses the reaction Release of the N-terminal residue from a tripeptide.. Cleaves the N-terminal amino acid of tripeptides. The protein is Peptidase T of Lactococcus lactis subsp. cremoris (Streptococcus cremoris).